Reading from the N-terminus, the 1370-residue chain is Major capsid protein (1370 aa).

The protein belongs to the herpesviridae major capsid protein family. As to quaternary structure, homomultimer. Makes the hexons and eleven out of twelve pentons. Interacts with triplex proteins 1/TRX1 and 2/TRX2; adjacent capsomers are linked together in groups of three by triplexes, heterotrimeric complexes composed of one molecule of TRX1 and two molecules of TRX2. Interacts with scaffold protein; this interaction allows efficient MCP transport to the host nucleus. Interacts with capsid vertex component 2/CVC2. Interacts with the small capsomere-interacting protein/SCP.

The protein resides in the virion. Its subcellular location is the host nucleus. Functionally, self-assembles to form an icosahedral capsid with a T=16 symmetry, about 200 nm in diameter, and consisting of 150 hexons and 12 pentons (total of 162 capsomers). Hexons form the edges and faces of the capsid and are each composed of six MCP molecules. In contrast, one penton is found at each of the 12 vertices. Eleven of the pentons are MCP pentamers, while the last vertex is occupied by the portal complex. The capsid is surrounded by a layer of proteinaceous material designated the tegument which, in turn, is enclosed in an envelope of host cell-derived lipids containing virus-encoded glycoproteins. This chain is Major capsid protein, found in Human cytomegalovirus (strain AD169) (HHV-5).